The primary structure comprises 261 residues: tRNA pseudouridine synthase A (261 aa).

Catalysis depends on D51, which acts as the Nucleophile. Residue Y109 participates in substrate binding.

The protein belongs to the tRNA pseudouridine synthase TruA family. As to quaternary structure, homodimer.

The catalysed reaction is uridine(38/39/40) in tRNA = pseudouridine(38/39/40) in tRNA. Formation of pseudouridine at positions 38, 39 and 40 in the anticodon stem and loop of transfer RNAs. This is tRNA pseudouridine synthase A from Idiomarina loihiensis (strain ATCC BAA-735 / DSM 15497 / L2-TR).